Reading from the N-terminus, the 812-residue chain is Phospholipase D alpha 2 (812 aa).

A propeptide spanning residues 1–36 (MAQHLLHGTLHATIYEVDALHTGGLRSAGFLGKIIS) is cleaved from the precursor. The 127-residue stretch at 1–127 (MAQHLLHGTL…INGEEVEKWV (127 aa)) folds into the C2 domain. Residues 328–368 (AMFTHHQKIVVVDSEVPSQGGGSEMRRIMSFVGGIDLCDGR) enclose the PLD phosphodiesterase 1 domain. Residues His-333, Lys-335, and Asp-340 contribute to the active site. Residue His-333 participates in a 1,2-diacyl-sn-glycero-3-phosphate binding. His-374 lines the Ca(2+) pocket. A 1,2-diacyl-sn-glycero-3-phosphate contacts are provided by Gln-524 and His-663. In terms of domain architecture, PLD phosphodiesterase 2 spans 658 to 685 (FMIYVHSKMMIVDDEYIIVGSANINQRS). Residues His-663, Lys-665, and Asp-670 contribute to the active site. Glu-724 contributes to the Ca(2+) binding site.

This sequence belongs to the phospholipase D family. C2-PLD subfamily. Ca(2+) serves as cofactor.

Its subcellular location is the cytoplasm. The protein localises to the membrane. It catalyses the reaction a 1,2-diacyl-sn-glycero-3-phosphocholine + H2O = a 1,2-diacyl-sn-glycero-3-phosphate + choline + H(+). Its function is as follows. Hydrolyzes glycerol-phospholipids at the terminal phosphodiesteric bond. Plays an important role in various cellular processes, including phytohormone action, vesicular trafficking, secretion, cytoskeletal arrangement, meiosis, tumor promotion, pathogenesis, membrane deterioration and senescence. In Brassica oleracea var. capitata (Cabbage), this protein is Phospholipase D alpha 2 (PLD2).